A 108-amino-acid chain; its full sequence is Insertion element IS6110 uncharacterized 12.0 kDa protein (108 aa).

Belongs to the transposase 8 family.

This is Insertion element IS6110 uncharacterized 12.0 kDa protein from Mycobacterium bovis (strain ATCC BAA-935 / AF2122/97).